We begin with the raw amino-acid sequence, 568 residues long: DNA ligase 2 (568 aa).

Glu254 lines the ATP pocket. The active-site N6-AMP-lysine intermediate is the Lys256. Arg261, Arg276, Glu306, Phe346, Arg425, and Lys431 together coordinate ATP.

Belongs to the ATP-dependent DNA ligase family. Requires Mg(2+) as cofactor.

It carries out the reaction ATP + (deoxyribonucleotide)n-3'-hydroxyl + 5'-phospho-(deoxyribonucleotide)m = (deoxyribonucleotide)n+m + AMP + diphosphate.. In terms of biological role, DNA ligase that seals nicks in double-stranded DNA during DNA replication, DNA recombination and DNA repair. The polypeptide is DNA ligase 2 (Methanosarcina mazei (strain ATCC BAA-159 / DSM 3647 / Goe1 / Go1 / JCM 11833 / OCM 88) (Methanosarcina frisia)).